A 280-amino-acid polypeptide reads, in one-letter code: Lacto-N-neotetraose biosynthesis glycosyltransferase LgtE (280 aa).

The protein belongs to the glycosyltransferase 25 family.

The protein operates within glycan metabolism; lacto-N-neotetraose biosynthesis. It participates in bacterial outer membrane biogenesis; lipooligosaccharide biosynthesis. Adds the first galactose to the lacto-N-tetraose chain in lipooligosaccharide (LOS). This Neisseria meningitidis serogroup B (strain ATCC BAA-335 / MC58) protein is Lacto-N-neotetraose biosynthesis glycosyltransferase LgtE (lgtE).